The chain runs to 420 residues: Odorant receptor 63a (420 aa).

At 1–43 the chain is on the cytoplasmic side; sequence MYSPEEAAELKRRNYRSIREMIRLSYTVGFNLLDPSRCGQVLR. Residues 44–64 traverse the membrane as a helical segment; the sequence is IWTIVLSVSSLASLYGHWQML. At 65–76 the chain is on the extracellular side; that stretch reads ARYIHDIPRIGE. Residues 77 to 97 form a helical membrane-spanning segment; that stretch reads TAGTALQFLTSIAKMWYFLFA. Topologically, residues 98 to 150 are cytoplasmic; it reads HRQIYELLRKARCHELLQKCELFERMSDLPVIKEIRQQVESTMNRYWASTRRQ. The helical transmembrane segment at 151–171 threads the bilayer; the sequence is ILIYLYSCICITTNYFINSFV. At 172–217 the chain is on the extracellular side; it reads INLYRYFTKPKGSYDIMLPLPSLYPAWEHKGLEFPYYHIQMYLETC. The chain crosses the membrane as a helical span at residues 218 to 238; sequence SLYICGMCAVSFDGVFIVLCL. The Cytoplasmic portion of the chain corresponds to 239-296; the sequence is HSVGLMRSLNQMVEQATSELVPPDRRVEYLRCCIYQYQRVANFATEVNNCFRHITFTQ. The helical transmembrane segment at 297-317 threads the bilayer; it reads FLLSLFNWGLALFQMSVGLGN. An N-linked (GlcNAc...) asparagine glycan is attached at Asn318. The Extracellular segment spans residues 318–320; sequence NSS. The helical transmembrane segment at 321–341 threads the bilayer; sequence ITMIRMTMYLVAAGYQIVVYC. Residues 342–387 are Cytoplasmic-facing; sequence YNGQRFATASEEIANAFYQVRWYGESREFRHLIRMMLMRTNRGFRL. Residues 388-408 form a helical membrane-spanning segment; that stretch reads DVSWFMQMSLPTLMAMVRTSG. The Extracellular portion of the chain corresponds to 409–420; the sequence is QYFLLLQNVNQK.

This sequence belongs to the insect chemoreceptor superfamily. Heteromeric odorant receptor channel (TC 1.A.69) family. Or63a subfamily. As to quaternary structure, interacts with Orco. Complexes exist early in the endomembrane system in olfactory sensory neurons (OSNs), coupling these complexes to the conserved ciliary trafficking pathway.

Its subcellular location is the cell membrane. Functionally, odorant receptor which mediates acceptance or avoidance behavior, depending on its substrates. The odorant receptor repertoire encodes a large collection of odor stimuli that vary widely in identity, intensity, and duration. May form a complex with Orco to form odorant-sensing units, providing sensitive and prolonged odorant signaling and calcium permeability. Involved in the behavioral responses to butyl acetate, isoamyl acetate, and hexanoic acid. This chain is Odorant receptor 63a (Or63a), found in Drosophila melanogaster (Fruit fly).